Consider the following 235-residue polypeptide: Leucyl/phenylalanyl-tRNA--protein transferase (235 aa).

The protein belongs to the L/F-transferase family.

It is found in the cytoplasm. The catalysed reaction is N-terminal L-lysyl-[protein] + L-leucyl-tRNA(Leu) = N-terminal L-leucyl-L-lysyl-[protein] + tRNA(Leu) + H(+). The enzyme catalyses N-terminal L-arginyl-[protein] + L-leucyl-tRNA(Leu) = N-terminal L-leucyl-L-arginyl-[protein] + tRNA(Leu) + H(+). It carries out the reaction L-phenylalanyl-tRNA(Phe) + an N-terminal L-alpha-aminoacyl-[protein] = an N-terminal L-phenylalanyl-L-alpha-aminoacyl-[protein] + tRNA(Phe). Functionally, functions in the N-end rule pathway of protein degradation where it conjugates Leu, Phe and, less efficiently, Met from aminoacyl-tRNAs to the N-termini of proteins containing an N-terminal arginine or lysine. This is Leucyl/phenylalanyl-tRNA--protein transferase from Aeromonas hydrophila subsp. hydrophila (strain ATCC 7966 / DSM 30187 / BCRC 13018 / CCUG 14551 / JCM 1027 / KCTC 2358 / NCIMB 9240 / NCTC 8049).